The primary structure comprises 70 residues: Conotoxin Im23.3 (70 aa).

An N-terminal signal peptide occupies residues 1–22 (MIMRMTLTLFVLVVMTAASASG). A propeptide spanning residues 23 to 28 (DALTEA) is cleaved from the precursor. 3 disulfides stabilise this stretch: Cys-34/Cys-41, Cys-45/Cys-53, and Cys-54/Cys-69.

It belongs to the conotoxin K superfamily. Expressed by the venom duct.

The protein resides in the secreted. In terms of biological role, neurotoxin that induces excitatory symptoms in mice following intracranial administration. No symptoms are observed after intraperitoneal and intravenous (tail vein) injections. The sequence is that of Conotoxin Im23.3 from Conus imperialis (Imperial cone).